The primary structure comprises 177 residues: MAPIKKRNQQNQPNINERIRFPKIRVVDADGTQLGIMAPSEAMEIADERNLDLVLVSDKADPPVCRVMDYGKFKFEQEKKAREAKKKQHTSDVKEVKMRYKIQTHDYEVRVNHAKRFLKSGDKVKATVTFRGREIQHSHLAEALLKKMANDLLDFAEIQQAPKREGRNMIMYLSPKK.

It belongs to the IF-3 family. As to quaternary structure, monomer.

It is found in the cytoplasm. In terms of biological role, IF-3 binds to the 30S ribosomal subunit and shifts the equilibrium between 70S ribosomes and their 50S and 30S subunits in favor of the free subunits, thus enhancing the availability of 30S subunits on which protein synthesis initiation begins. The protein is Translation initiation factor IF-3 of Acaryochloris marina (strain MBIC 11017).